The chain runs to 313 residues: Transaldolase (313 aa).

The Schiff-base intermediate with substrate role is filled by Lys-125.

This sequence belongs to the transaldolase family. Type 1 subfamily. As to quaternary structure, homodimer.

The protein resides in the cytoplasm. The enzyme catalyses D-sedoheptulose 7-phosphate + D-glyceraldehyde 3-phosphate = D-erythrose 4-phosphate + beta-D-fructose 6-phosphate. Its pathway is carbohydrate degradation; pentose phosphate pathway; D-glyceraldehyde 3-phosphate and beta-D-fructose 6-phosphate from D-ribose 5-phosphate and D-xylulose 5-phosphate (non-oxidative stage): step 2/3. Transaldolase is important for the balance of metabolites in the pentose-phosphate pathway. The polypeptide is Transaldolase (Pseudomonas syringae pv. syringae (strain B728a)).